Consider the following 176-residue polypeptide: Ribosome maturation factor RimM (176 aa).

In terms of domain architecture, PRC barrel spans 93 to 168; that stretch reads DDEVYIEDIL…TIRITPPPGL (76 aa).

Belongs to the RimM family. Binds ribosomal protein uS19.

It localises to the cytoplasm. In terms of biological role, an accessory protein needed during the final step in the assembly of 30S ribosomal subunit, possibly for assembly of the head region. Essential for efficient processing of 16S rRNA. May be needed both before and after RbfA during the maturation of 16S rRNA. It has affinity for free ribosomal 30S subunits but not for 70S ribosomes. The polypeptide is Ribosome maturation factor RimM (Oleidesulfovibrio alaskensis (strain ATCC BAA-1058 / DSM 17464 / G20) (Desulfovibrio alaskensis)).